The primary structure comprises 110 residues: Nucleoid-associated protein Sfri_2406 (110 aa).

Belongs to the YbaB/EbfC family. As to quaternary structure, homodimer.

Its subcellular location is the cytoplasm. It localises to the nucleoid. Binds to DNA and alters its conformation. May be involved in regulation of gene expression, nucleoid organization and DNA protection. The sequence is that of Nucleoid-associated protein Sfri_2406 from Shewanella frigidimarina (strain NCIMB 400).